The sequence spans 418 residues: Glutamyl-tRNA reductase (418 aa).

Residues 49-52, S109, 114-116, and Q120 contribute to the substrate site; these read TCNR and EPQ. Residue C50 is the Nucleophile of the active site. 189-194 provides a ligand contact to NADP(+); that stretch reads GAGETI.

It belongs to the glutamyl-tRNA reductase family. In terms of assembly, homodimer.

It catalyses the reaction (S)-4-amino-5-oxopentanoate + tRNA(Glu) + NADP(+) = L-glutamyl-tRNA(Glu) + NADPH + H(+). It participates in porphyrin-containing compound metabolism; protoporphyrin-IX biosynthesis; 5-aminolevulinate from L-glutamyl-tRNA(Glu): step 1/2. Its function is as follows. Catalyzes the NADPH-dependent reduction of glutamyl-tRNA(Glu) to glutamate 1-semialdehyde (GSA). This Cronobacter sakazakii (strain ATCC BAA-894) (Enterobacter sakazakii) protein is Glutamyl-tRNA reductase.